Reading from the N-terminus, the 864-residue chain is Receptor like protein 24 (864 aa).

Positions 1-29 (MKTVFKSLLLLHFLLLLLLCFVSPSSFFL) are cleaved as a signal peptide. The Extracellular segment spans residues 30–830 (LKVPVGGLVA…EEKGEVINWK (801 aa)). N-linked (GlcNAc...) asparagine glycosylation is found at asparagine 61, asparagine 73, asparagine 94, and asparagine 112. LRR repeat units lie at residues 100 to 125 (FHQL…FCNL), 127 to 148 (KLKL…DLMG), 156 to 182 (LGKL…LFEL), 183 to 205 (HSLR…KFGN), 207 to 229 (NKLE…TISN), 230 to 253 (LTRI…VQNL), 254 to 277 (TKLS…LFTF), 279 to 303 (SLST…STSS), 305 to 326 (LEIM…ISKL), 327 to 350 (INLK…LLSP), 351 to 376 (LKSL…SYIP), 378 to 398 (SMES…ILKH), 399 to 423 (LQNL…LWTL), 425 to 448 (QLSF…VFVN), and 449 to 472 (LSVR…PLSI). Residues asparagine 176, asparagine 194, asparagine 229, and asparagine 252 are each glycosylated (N-linked (GlcNAc...) asparagine). Asparagine 298 is a glycosylation site (N-linked (GlcNAc...) asparagine). A glycan (N-linked (GlcNAc...) asparagine) is linked at asparagine 338. Asparagine 433 and asparagine 448 each carry an N-linked (GlcNAc...) asparagine glycan. One copy of the LRR 16; degenerate repeat lies at 473-492 (IGFSAIHNSFTGEIPLSICN). Asparagine 492 and asparagine 505 each carry an N-linked (GlcNAc...) asparagine glycan. 10 LRR repeats span residues 493 to 514 (RTSL…PQCL), 515 to 538 (SNFM…FYTD), 539 to 562 (SSLK…LLNC), 564 to 585 (SLRF…WLKA), 586 to 610 (LPNL…HQGP), 613 to 637 (FPEL…FFVN), 688 to 712 (LTSY…IGLL), 713 to 735 (KALI…SFAN), 736 to 760 (LMNL…LGSL), and 762 to 785 (FLVY…QITG). N-linked (GlcNAc...) asparagine glycosylation occurs at asparagine 561. N-linked (GlcNAc...) asparagine glycosylation is present at asparagine 719. A helical membrane pass occupies residues 831–851 (AVAIGYAPGLLFGLAIAHLIA). The Cytoplasmic segment spans residues 852-864 (SYKPEWLVKIIGF).

The protein belongs to the RLP family.

It localises to the cell membrane. This chain is Receptor like protein 24, found in Arabidopsis thaliana (Mouse-ear cress).